Consider the following 395-residue polypeptide: Acid ceramidase (395 aa).

An N-terminal signal peptide occupies residues 1-21 (MLGRSRLALVLLAAAVSCAVA). Cys31 and Cys340 are disulfide-bonded. Cys143 (nucleophile) is an active-site residue. 6 N-linked (GlcNAc...) asparagine glycosylation sites follow: Asn173, Asn195, Asn259, Asn286, Asn342, and Asn348. Cysteines 388 and 392 form a disulfide.

This sequence belongs to the acid ceramidase family. In terms of assembly, heterodimer; disulfide-linked. The heterodimer is composed of the disulfide-linked alpha and beta chains produced by autocatalytic cleavage of the precursor. N-glycosylated. In terms of processing, proteolytically cleaved into two chains alpha and beta that remain associated via a disulfide bond. Cleavage gives rise to a conformation change that activates the enzyme. The same catalytic Cys residue mediates the autoproteolytic cleavage and subsequent hydrolysis of lipid substrates. The beta chain may undergo an additional C-terminal processing.

It localises to the lysosome. Its subcellular location is the secreted. It catalyses the reaction an N-acylsphing-4-enine + H2O = sphing-4-enine + a fatty acid. The enzyme catalyses N-dodecanoylsphing-4-enine + H2O = dodecanoate + sphing-4-enine. It carries out the reaction N-tetradecanoylsphing-4-enine + H2O = tetradecanoate + sphing-4-enine. The catalysed reaction is N-hexadecanoylsphing-4-enine + H2O = sphing-4-enine + hexadecanoate. It catalyses the reaction N-octadecanoylsphing-4-enine + H2O = sphing-4-enine + octadecanoate. The enzyme catalyses N-dodecanoyl-(4R)-hydroxysphinganine + H2O = (4R)-hydroxysphinganine + dodecanoate. It carries out the reaction N-(dodecanoyl)-sphinganine + H2O = dodecanoate + sphinganine. The catalysed reaction is N-(acetyl)-sphing-4-enine + H2O = sphing-4-enine + acetate. It catalyses the reaction N-(hexanoyl)sphing-4-enine + H2O = hexanoate + sphing-4-enine. The enzyme catalyses N-octanoylsphing-4-enine + H2O = octanoate + sphing-4-enine. It carries out the reaction N-(9Z-octadecenoyl)-sphing-4-enine + H2O = sphing-4-enine + (9Z)-octadecenoate. The catalysed reaction is N-dodecanoylethanolamine + H2O = dodecanoate + ethanolamine. The protein operates within lipid metabolism; sphingolipid metabolism. Its function is as follows. Lysosomal ceramidase that hydrolyzes sphingolipid ceramides into sphingosine and free fatty acids at acidic pH. Ceramides, sphingosine, and its phosphorylated form sphingosine-1-phosphate are bioactive lipids that mediate cellular signaling pathways regulating several biological processes including cell proliferation, apoptosis and differentiation. Has a higher catalytic efficiency towards C12-ceramides versus other ceramides. Also catalyzes the reverse reaction allowing the synthesis of ceramides from fatty acids and sphingosine. For the reverse synthetic reaction, the natural sphingosine D-erythro isomer is more efficiently utilized as a substrate compared to D-erythro-dihydrosphingosine and D-erythro-phytosphingosine, while the fatty acids with chain lengths of 12 or 14 carbons are the most efficiently used. Also has an N-acylethanolamine hydrolase activity. By regulating the levels of ceramides, sphingosine and sphingosine-1-phosphate in the epidermis, mediates the calcium-induced differentiation of epidermal keratinocytes. Also indirectly regulates tumor necrosis factor/TNF-induced apoptosis. By regulating the intracellular balance between ceramides and sphingosine, in adrenocortical cells, probably also acts as a regulator of steroidogenesis. This Macaca fascicularis (Crab-eating macaque) protein is Acid ceramidase.